Reading from the N-terminus, the 545-residue chain is Chaperonin GroEL (545 aa).

ATP contacts are provided by residues 30–33 (TLGP), K51, 87–91 (DGTTT), G415, and D495.

It belongs to the chaperonin (HSP60) family. As to quaternary structure, forms a cylinder of 14 subunits composed of two heptameric rings stacked back-to-back. Interacts with the co-chaperonin GroES.

It localises to the cytoplasm. The catalysed reaction is ATP + H2O + a folded polypeptide = ADP + phosphate + an unfolded polypeptide.. In terms of biological role, together with its co-chaperonin GroES, plays an essential role in assisting protein folding. The GroEL-GroES system forms a nano-cage that allows encapsulation of the non-native substrate proteins and provides a physical environment optimized to promote and accelerate protein folding. This Shewanella sp. (strain MR-7) protein is Chaperonin GroEL.